A 347-amino-acid chain; its full sequence is Lipopolysaccharide core heptosyltransferase OpsX (347 aa).

Belongs to the glycosyltransferase 9 family.

The protein operates within bacterial outer membrane biogenesis; LPS core biosynthesis. In terms of biological role, catalyzes heptose transfer to the lipopolysaccharide core. It transfers the first L-glycero-D-manno-heptose to the phosphorylated 3-deoxy-alpha-D-manno-octulosonic acid (Kdo-P) of the inner core. This chain is Lipopolysaccharide core heptosyltransferase OpsX, found in Haemophilus influenzae (strain ATCC 51907 / DSM 11121 / KW20 / Rd).